The chain runs to 351 residues: Cyanide hydratase (351 aa).

In terms of domain architecture, CN hydrolase spans 6 to 285 (YKAAAVTSEP…DGLLFVDIDL (280 aa)). Glutamate 46 (proton acceptor) is an active-site residue. Lysine 128 is an active-site residue. Cysteine 163 functions as the Nucleophile in the catalytic mechanism.

The protein belongs to the carbon-nitrogen hydrolase superfamily. Nitrilase family. In terms of assembly, oligomer of dimers, forming left-handed helical fibers with a diameter of 13 nm but with lengths ranging from approximately 1 um at the leading edge of the peak to having approximately the same length and diameter at the trailing edge.

The catalysed reaction is formamide = hydrogen cyanide + H2O. Functionally, catalyzes the hydration of cyanide to formamide. Degradation of cyanide may be important for plant pathogenic fungi in infection of cyanogenic plants. This is Cyanide hydratase from Neurospora crassa (strain ATCC 24698 / 74-OR23-1A / CBS 708.71 / DSM 1257 / FGSC 987).